The sequence spans 365 residues: DNA replication and repair protein RecF (365 aa).

Position 30–37 (30–37 (GRNAQGKT)) interacts with ATP.

It belongs to the RecF family.

It is found in the cytoplasm. The RecF protein is involved in DNA metabolism; it is required for DNA replication and normal SOS inducibility. RecF binds preferentially to single-stranded, linear DNA. It also seems to bind ATP. In Streptococcus pneumoniae (strain 70585), this protein is DNA replication and repair protein RecF.